A 395-amino-acid chain; its full sequence is tRNA-specific 2-thiouridylase MnmA (395 aa).

ATP is bound by residues 7-14 (GLSGGVDS) and methionine 33. Positions 95–97 (NPD) are interaction with target base in tRNA. The Nucleophile role is filled by cysteine 100. Cysteine 100 and cysteine 200 are joined by a disulfide. Glycine 124 is a binding site for ATP. The interaction with tRNA stretch occupies residues 150–152 (KDQ). Residue cysteine 200 is the Cysteine persulfide intermediate of the active site. An interaction with tRNA region spans residues 346-347 (RY).

The protein belongs to the MnmA/TRMU family.

It is found in the cytoplasm. The enzyme catalyses S-sulfanyl-L-cysteinyl-[protein] + uridine(34) in tRNA + AH2 + ATP = 2-thiouridine(34) in tRNA + L-cysteinyl-[protein] + A + AMP + diphosphate + H(+). Catalyzes the 2-thiolation of uridine at the wobble position (U34) of tRNA, leading to the formation of s(2)U34. The polypeptide is tRNA-specific 2-thiouridylase MnmA (Christiangramia forsetii (strain DSM 17595 / CGMCC 1.15422 / KT0803) (Gramella forsetii)).